The following is an 845-amino-acid chain: Matrin-3 (845 aa).

S2 is subject to N-acetylserine. Position 3 is an N6-acetyllysine; alternate (K3). K3 is covalently cross-linked (Glycyl lysine isopeptide (Lys-Gly) (interchain with G-Cter in SUMO2); alternate). Residues S4, S9, S14, S22, S41, S118, and S126 each carry the phosphoserine modification. Residues K132 and K146 each participate in a glycyl lysine isopeptide (Lys-Gly) (interchain with G-Cter in SUMO2) cross-link. Disordered regions lie at residues 147 to 174 (RRRT…YRVP) and 187 to 213 (DSFD…ESGY). Phosphothreonine is present on T150. S157 is subject to Phosphoserine. Phosphotyrosine is present on Y158. Residues 160–174 (RDGRSATREPPYRVP) show a composition bias toward basic and acidic residues. 3 positions are modified to phosphoserine: S164, S188, and S195. Positions 201 to 213 (DYDHGSRSQESGY) are enriched in basic and acidic residues. Y202 bears the Phosphotyrosine mark. A phosphoserine mark is found at S206, S208, and S211. A Phosphotyrosine modification is found at Y219. At S234 the chain carries Phosphoserine. Residue K245 forms a Glycyl lysine isopeptide (Lys-Gly) (interchain with G-Cter in SUMO2) linkage. Phosphoserine is present on S264. K269 is covalently cross-linked (Glycyl lysine isopeptide (Lys-Gly) (interchain with G-Cter in SUMO2)). Residue S275 is modified to Phosphoserine. Positions 342-394 (PFMLQQSTNPAPGILGPPPPSFHLGGPAVGPRGNLGAGNGNLQGPRHMQKGRV) are disordered. Residues 398-473 (RVVHIMDFQR…KPVRVHLSQK (76 aa)) form the RRM 1 domain. Glycyl lysine isopeptide (Lys-Gly) (interchain with G-Cter in SUMO2) cross-links involve residues K478, K487, and K491. Positions 496–571 (RVIHLSNLPH…RCVKVDLSEK (76 aa)) constitute an RRM 2 domain. A phosphoserine mark is found at S509 and S511. K515 participates in a covalent cross-link: Glycyl lysine isopeptide (Lys-Gly) (interchain with G-Cter in SUMO2). N6-acetyllysine; alternate is present on K522. Residue K522 forms a Glycyl lysine isopeptide (Lys-Gly) (interchain with G-Cter in SUMO2); alternate linkage. S533 carries the post-translational modification Phosphoserine. Glycyl lysine isopeptide (Lys-Gly) (interchain with G-Cter in SUMO2) cross-links involve residues K554 and K555. K571 is modified (N6-acetyllysine). Positions 588–785 (KKDKSRKRSY…EYRIGPYQPN (198 aa)) are disordered. 4 positions are modified to phosphoserine: S596, S598, S604, and S606. Over residues 600 to 643 (DGKESPSDKKSKTDGAQKTENPAEGKEQEEKSGEDGEKDTKDDQ) the composition is skewed to basic and acidic residues. Residues K617 and K630 each participate in a glycyl lysine isopeptide (Lys-Gly) (interchain with G-Cter in SUMO2) cross-link. Over residues 653–665 (ESEDELLVDEEEA) the composition is skewed to acidic residues. A phosphoserine mark is found at S654, S671, S673, and S674. T679 carries the phosphothreonine modification. At S689 the chain carries Phosphoserine. Over residues 689-704 (SDGKKEPSDKAVKKDA) the composition is skewed to basic and acidic residues. The Nuclear localization signal signature appears at 708-716 (SKKKLKKVD). Glycyl lysine isopeptide (Lys-Gly) (interchain with G-Cter in SUMO2) cross-links involve residues K717 and K734. Residue T739 is modified to Phosphothreonine. A phosphoserine mark is found at S745, S757, and S760. The segment covering 765–778 (DENKEDYTIPDEYR) has biased composition (basic and acidic residues). A Glycyl lysine isopeptide (Lys-Gly) (interchain with G-Cter in SUMO2) cross-link involves residue K768. A Matrin-type zinc finger spans residues 799–830 (FYCKLCSLFYTNEEVAKNTHCSSLPHYQKLKK). Position 834 is an N6-acetyllysine; alternate (K834). K834 is covalently cross-linked (Glycyl lysine isopeptide (Lys-Gly) (interchain with G-Cter in SUMO2); alternate).

As to quaternary structure, part of a complex consisting of SFPQ, NONO and MATR3. Interacts with AGO1 and AGO2. Part of a complex composed at least of ASH2L, EMSY, HCFC1, HSPA8, CCAR2, MATR3, MKI67, RBBP5, TUBB2A, WDR5 and ZNF335; this complex may have a histone H3-specific methyltransferase activity. Interacts with TARDBP. Part of the HDP-RNP complex composed of at least HEXIM1, PRKDC, XRCC5, XRCC6, paraspeckle proteins (SFPQ, NONO, PSPC1, RBM14, and MATR3) and NEAT1 RNA. Interacts with FUS. Interacts with IGF2BP1. Interacts with IGF2BP2 and IGF2BP3. Interacts with RBPMS.

It is found in the nucleus matrix. May play a role in transcription or may interact with other nuclear matrix proteins to form the internal fibrogranular network. In association with the SFPQ-NONO heteromer may play a role in nuclear retention of defective RNAs. Plays a role in the regulation of DNA virus-mediated innate immune response by assembling into the HDP-RNP complex, a complex that serves as a platform for IRF3 phosphorylation and subsequent innate immune response activation through the cGAS-STING pathway. Binds to N6-methyladenosine (m6A)-containing mRNAs and contributes to MYC stability by binding to m6A-containing MYC mRNAs. May bind to specific miRNA hairpins. This chain is Matrin-3 (Matr3), found in Rattus norvegicus (Rat).